Reading from the N-terminus, the 440-residue chain is Long-chain alkane monooxygenase (440 aa).

Residues D58, 137 to 138 (SH), Y158, and 227 to 230 (AGMS) each bind FMN.

The protein belongs to the NtaA/SnaA/DszA monooxygenase family. Homodimer.

The protein localises to the secreted. It catalyses the reaction a long-chain alkane + FMNH2 + O2 = a long chain fatty alcohol + FMN + H2O + H(+). In terms of biological role, involved in the degradation of long-chain alkanes. Converts alkanes ranging from C(15) to C(36) into their corresponding primary alcohols. This Geobacillus thermodenitrificans (strain NG80-2) protein is Long-chain alkane monooxygenase.